We begin with the raw amino-acid sequence, 444 residues long: Probable D-serine dehydratase (444 aa).

Position 118 is an N6-(pyridoxal phosphate)lysine (Lys-118).

This sequence belongs to the serine/threonine dehydratase family. DsdA subfamily. Requires pyridoxal 5'-phosphate as cofactor.

The enzyme catalyses D-serine = pyruvate + NH4(+). In Acinetobacter baumannii (strain AB0057), this protein is Probable D-serine dehydratase.